We begin with the raw amino-acid sequence, 68 residues long: Conotoxin mr3g (68 aa).

The signal sequence occupies residues 1–19 (MSKLGVLLTICLLLFALTA). The propeptide occupies 20–51 (VPLDGDQPADRPAERMQDDISSERHPMFDAVR). Disulfide bonds link Cys-53–Cys-67, Cys-54–Cys-63, and Cys-59–Cys-66. 4-hydroxyproline occurs at positions 55 and 65. Cys-67 carries the cysteine amide modification.

As to expression, expressed by the venom duct.

It is found in the secreted. Functionally, intracranially injection into mice does not elicit symptoms. This Conus marmoreus (Marble cone) protein is Conotoxin mr3g.